We begin with the raw amino-acid sequence, 201 residues long: uncharacterized protein (201 aa).

A signal peptide spans 1-23 (MKILYFIFVIIINILLILNHVKS). Topologically, residues 24–178 (KYNTFIFENT…GNYGEDPQRN (155 aa)) are extracellular. N-linked (GlcNAc...) asparagine glycans are attached at residues Asn-114 and Asn-134. The tract at residues 122-157 (TPETPSPTENAPNTSGGSSEGNHYTYKSSSSSSEHI) is disordered. The segment covering 123-148 (PETPSPTENAPNTSGGSSEGNHYTYK) has biased composition (polar residues). Residues 179–199 (IGISLSSSLIFISILFLIIFI) form a helical membrane-spanning segment. Over 200–201 (NN) the chain is Cytoplasmic.

It is found in the membrane. This is an uncharacterized protein from Dictyostelium discoideum (Social amoeba).